The following is a 382-amino-acid chain: Dual-specificity RNA methyltransferase RlmN (382 aa).

Residue Glu95 is the Proton acceptor of the active site. The Radical SAM core domain maps to 101 to 347; the sequence is EDDRGTLCIS…TTVRKTRGDD (247 aa). The cysteines at positions 108 and 352 are disulfide-linked. Residues Cys115, Cys119, and Cys122 each contribute to the [4Fe-4S] cluster site. S-adenosyl-L-methionine-binding positions include 178–179, Ser210, 232–234, and Asn309; these read GE and SLH. Residue Cys352 is the S-methylcysteine intermediate of the active site.

The protein belongs to the radical SAM superfamily. RlmN family. It depends on [4Fe-4S] cluster as a cofactor.

It is found in the cytoplasm. It catalyses the reaction adenosine(2503) in 23S rRNA + 2 reduced [2Fe-2S]-[ferredoxin] + 2 S-adenosyl-L-methionine = 2-methyladenosine(2503) in 23S rRNA + 5'-deoxyadenosine + L-methionine + 2 oxidized [2Fe-2S]-[ferredoxin] + S-adenosyl-L-homocysteine. The enzyme catalyses adenosine(37) in tRNA + 2 reduced [2Fe-2S]-[ferredoxin] + 2 S-adenosyl-L-methionine = 2-methyladenosine(37) in tRNA + 5'-deoxyadenosine + L-methionine + 2 oxidized [2Fe-2S]-[ferredoxin] + S-adenosyl-L-homocysteine. Specifically methylates position 2 of adenine 2503 in 23S rRNA and position 2 of adenine 37 in tRNAs. m2A2503 modification seems to play a crucial role in the proofreading step occurring at the peptidyl transferase center and thus would serve to optimize ribosomal fidelity. The polypeptide is Dual-specificity RNA methyltransferase RlmN (Bordetella avium (strain 197N)).